A 183-amino-acid polypeptide reads, in one-letter code: NADH-ubiquinone oxidoreductase 20.8 kDa subunit (183 aa).

CHCH domains lie at Gly-44–Ile-87 and Asn-88–Lys-130. 4 short sequence motifs (cx9C motif) span residues Cys-47 to Cys-57, Cys-69 to Cys-79, Cys-91 to Cys-101, and Cys-112 to Cys-122. 4 disulfides stabilise this stretch: Cys-47-Cys-79, Cys-57-Cys-69, Cys-91-Cys-122, and Cys-101-Cys-112. The interval Glu-161–Ser-183 is disordered.

It belongs to the complex I NDUFA8 subunit family. Complex I is composed of about 40 different subunits. This is a component of the hydrophobic fraction. Iron-sulfur cluster is required as a cofactor.

It is found in the mitochondrion inner membrane. Its function is as follows. Accessory subunit of the mitochondrial membrane respiratory chain NADH dehydrogenase (Complex I), that is believed not to be involved in catalysis. Complex I functions in the transfer of electrons from NADH to the respiratory chain. The immediate electron acceptor for the enzyme is believed to be ubiquinone. The chain is NADH-ubiquinone oxidoreductase 20.8 kDa subunit from Neurospora crassa (strain ATCC 24698 / 74-OR23-1A / CBS 708.71 / DSM 1257 / FGSC 987).